A 472-amino-acid chain; its full sequence is L-aspartate oxidase (472 aa).

FAD-binding positions include 7 to 10 (SGIA), S29, 36 to 37 (ST), 42 to 43 (GG), and D191. R257 functions as the Proton donor/acceptor in the catalytic mechanism. Residues E337 and 353 to 354 (SL) each bind FAD.

Belongs to the FAD-dependent oxidoreductase 2 family. NadB subfamily. As to quaternary structure, monomer. FAD serves as cofactor.

The protein resides in the cytoplasm. The catalysed reaction is L-aspartate + O2 = iminosuccinate + H2O2. It functions in the pathway cofactor biosynthesis; NAD(+) biosynthesis; iminoaspartate from L-aspartate (oxidase route): step 1/1. In terms of biological role, catalyzes the oxidation of L-aspartate to iminoaspartate, the first step in the de novo biosynthesis of NAD(+). Can also use L-asparagine, but not L-phenylalanine, L-glutamate, glycine, L-proline, L-alanine and D-aspartate. In Sulfurisphaera tokodaii (strain DSM 16993 / JCM 10545 / NBRC 100140 / 7) (Sulfolobus tokodaii), this protein is L-aspartate oxidase.